The primary structure comprises 269 residues: Indole-3-glycerol phosphate synthase (269 aa).

It belongs to the TrpC family.

The catalysed reaction is 1-(2-carboxyphenylamino)-1-deoxy-D-ribulose 5-phosphate + H(+) = (1S,2R)-1-C-(indol-3-yl)glycerol 3-phosphate + CO2 + H2O. The protein operates within amino-acid biosynthesis; L-tryptophan biosynthesis; L-tryptophan from chorismate: step 4/5. The chain is Indole-3-glycerol phosphate synthase from Saccharopolyspora erythraea (strain ATCC 11635 / DSM 40517 / JCM 4748 / NBRC 13426 / NCIMB 8594 / NRRL 2338).